The primary structure comprises 74 residues: uncharacterized protein (74 aa).

This is an uncharacterized protein from Escherichia coli (strain K12).